The sequence spans 276 residues: NH(3)-dependent NAD(+) synthetase (276 aa).

43-50 (GISGGVDS) provides a ligand contact to ATP. Position 49 (Asp-49) interacts with Mg(2+). Arg-146 provides a ligand contact to deamido-NAD(+). Thr-166 contributes to the ATP binding site. A Mg(2+)-binding site is contributed by Glu-171. Residues Lys-179 and Asp-186 each coordinate deamido-NAD(+). Lys-195 and Thr-217 together coordinate ATP. 266–267 (HK) serves as a coordination point for deamido-NAD(+).

It belongs to the NAD synthetase family. As to quaternary structure, homodimer.

It catalyses the reaction deamido-NAD(+) + NH4(+) + ATP = AMP + diphosphate + NAD(+) + H(+). The protein operates within cofactor biosynthesis; NAD(+) biosynthesis; NAD(+) from deamido-NAD(+) (ammonia route): step 1/1. Catalyzes the ATP-dependent amidation of deamido-NAD to form NAD. Uses ammonia as a nitrogen source. The protein is NH(3)-dependent NAD(+) synthetase of Shewanella putrefaciens (strain CN-32 / ATCC BAA-453).